Here is a 561-residue protein sequence, read N- to C-terminus: uncharacterized protein (561 aa).

2 disordered regions span residues S369–G390 and E429–E515. S383 is subject to Phosphoserine. The segment covering N465–S503 has biased composition (polar residues).

This is an uncharacterized protein from Schizosaccharomyces pombe (strain 972 / ATCC 24843) (Fission yeast).